Reading from the N-terminus, the 254-residue chain is Diphthine synthase (254 aa).

Residues leucine 11, aspartate 87, isoleucine 90, 115–116, leucine 167, leucine 208, and histidine 233 contribute to the S-adenosyl-L-methionine site; that span reads SV.

The protein belongs to the diphthine synthase family. In terms of assembly, homodimer.

The enzyme catalyses 2-[(3S)-amino-3-carboxypropyl]-L-histidyl-[translation elongation factor 2] + 3 S-adenosyl-L-methionine = diphthine-[translation elongation factor 2] + 3 S-adenosyl-L-homocysteine + 3 H(+). Its pathway is protein modification; peptidyl-diphthamide biosynthesis. S-adenosyl-L-methionine-dependent methyltransferase that catalyzes the trimethylation of the amino group of the modified target histidine residue in translation elongation factor 2 (EF-2), to form an intermediate called diphthine. The three successive methylation reactions represent the second step of diphthamide biosynthesis. The protein is Diphthine synthase of Metallosphaera sedula (strain ATCC 51363 / DSM 5348 / JCM 9185 / NBRC 15509 / TH2).